The following is a 166-amino-acid chain: ATP synthase subunit b (166 aa).

A helical transmembrane segment spans residues 7 to 27 (QFSLGLFILQIILFVGLILLL).

Belongs to the ATPase B chain family. In terms of assembly, F-type ATPases have 2 components, F(1) - the catalytic core - and F(0) - the membrane proton channel. F(1) has five subunits: alpha(3), beta(3), gamma(1), delta(1), epsilon(1). F(0) has three main subunits: a(1), b(2) and c(10-14). The alpha and beta chains form an alternating ring which encloses part of the gamma chain. F(1) is attached to F(0) by a central stalk formed by the gamma and epsilon chains, while a peripheral stalk is formed by the delta and b chains.

The protein resides in the cell inner membrane. In terms of biological role, f(1)F(0) ATP synthase produces ATP from ADP in the presence of a proton or sodium gradient. F-type ATPases consist of two structural domains, F(1) containing the extramembraneous catalytic core and F(0) containing the membrane proton channel, linked together by a central stalk and a peripheral stalk. During catalysis, ATP synthesis in the catalytic domain of F(1) is coupled via a rotary mechanism of the central stalk subunits to proton translocation. Functionally, component of the F(0) channel, it forms part of the peripheral stalk, linking F(1) to F(0). This is ATP synthase subunit b from Flavobacterium psychrophilum (strain ATCC 49511 / DSM 21280 / CIP 103535 / JIP02/86).